Reading from the N-terminus, the 184-residue chain is Peptide deformylase 2 (184 aa).

Fe cation-binding residues include C110 and H153. E154 is an active-site residue. H157 contributes to the Fe cation binding site.

This sequence belongs to the polypeptide deformylase family. Fe(2+) is required as a cofactor.

It catalyses the reaction N-terminal N-formyl-L-methionyl-[peptide] + H2O = N-terminal L-methionyl-[peptide] + formate. In terms of biological role, removes the formyl group from the N-terminal Met of newly synthesized proteins. Requires at least a dipeptide for an efficient rate of reaction. N-terminal L-methionine is a prerequisite for activity but the enzyme has broad specificity at other positions. The polypeptide is Peptide deformylase 2 (Bacillus anthracis).